The following is a 381-amino-acid chain: Arrestin homolog (381 aa).

The protein belongs to the arrestin family.

This chain is Arrestin homolog, found in Heliothis virescens (Tobacco budworm moth).